Reading from the N-terminus, the 747-residue chain is Asparagine synthetase [glutamine-hydrolyzing] 2 (747 aa).

The active-site For GATase activity is Cys-2. The Glutamine amidotransferase type-2 domain occupies 2 to 218 (CGLAGIINLA…AGHYLEINLT (217 aa)). Residues 52 to 56 (RLSIL), 77 to 79 (NGE), and Asp-100 contribute to the L-glutamine site. An ATP-binding site is contributed by 395 to 396 (SP).

The protein belongs to the asparagine synthetase family.

It catalyses the reaction L-aspartate + L-glutamine + ATP + H2O = L-asparagine + L-glutamate + AMP + diphosphate + H(+). It functions in the pathway amino-acid biosynthesis; L-asparagine biosynthesis; L-asparagine from L-aspartate (L-Gln route): step 1/1. This Bacillus subtilis (strain 168) protein is Asparagine synthetase [glutamine-hydrolyzing] 2 (asnH).